The sequence spans 266 residues: UPF0354 protein LMHCC_0955 (266 aa).

The protein belongs to the UPF0354 family.

The protein is UPF0354 protein LMHCC_0955 of Listeria monocytogenes serotype 4a (strain HCC23).